Reading from the N-terminus, the 252-residue chain is Isoprenyl transferase (252 aa).

D28 is a catalytic residue. Residue D28 participates in Mg(2+) binding. Residues 29-32 (GNGR), W33, R41, H45, and 73-75 (STE) contribute to the substrate site. N76 serves as the catalytic Proton acceptor. Substrate contacts are provided by residues W77, R79, R200, and 206–208 (RLS). Residue E219 participates in Mg(2+) binding.

The protein belongs to the UPP synthase family. As to quaternary structure, homodimer. It depends on Mg(2+) as a cofactor.

Catalyzes the condensation of isopentenyl diphosphate (IPP) with allylic pyrophosphates generating different type of terpenoids. This is Isoprenyl transferase from Streptococcus pneumoniae serotype 4 (strain ATCC BAA-334 / TIGR4).